A 466-amino-acid chain; its full sequence is 3-isopropylmalate dehydratase large subunit (466 aa).

Residues cysteine 347, cysteine 407, and cysteine 410 each contribute to the [4Fe-4S] cluster site.

The protein belongs to the aconitase/IPM isomerase family. LeuC type 1 subfamily. In terms of assembly, heterodimer of LeuC and LeuD. [4Fe-4S] cluster serves as cofactor.

The catalysed reaction is (2R,3S)-3-isopropylmalate = (2S)-2-isopropylmalate. It participates in amino-acid biosynthesis; L-leucine biosynthesis; L-leucine from 3-methyl-2-oxobutanoate: step 2/4. Catalyzes the isomerization between 2-isopropylmalate and 3-isopropylmalate, via the formation of 2-isopropylmaleate. In Shigella sonnei (strain Ss046), this protein is 3-isopropylmalate dehydratase large subunit.